We begin with the raw amino-acid sequence, 309 residues long: MKQKILVLGGPTAVGKTELSIKLAEKLNGEILSADSMQIYKKMDIGSAKVTKEEMRDINHHMIDIVSPEEEFSVADFKNIGEKAIKEIIAKEKLPMIVGGTGLYINSLTCNVTFTESEKDDEYRTYLESLAEANGNNYVHEMLREIDEISYRDIHPNNRKRVIRALEVYKISGKPFSSYNAGNDFYKTDYHVFYYVLTMDREKLYDRINKRVDIMIENGLIDECIELKKLGYTSSMQSMQGIGYKEILYYLDKKISLYEAVNLIKQGSRNYAKRQLTWFRRDPRCTFLDKDVLSDKEILSKIVDDITNN.

Residue 10–17 (GPTAVGKT) participates in ATP binding. Position 12–17 (12–17 (TAVGKT)) interacts with substrate. The segment at 35-38 (DSMQ) is interaction with substrate tRNA.

Belongs to the IPP transferase family. Monomer. It depends on Mg(2+) as a cofactor.

It catalyses the reaction adenosine(37) in tRNA + dimethylallyl diphosphate = N(6)-dimethylallyladenosine(37) in tRNA + diphosphate. In terms of biological role, catalyzes the transfer of a dimethylallyl group onto the adenine at position 37 in tRNAs that read codons beginning with uridine, leading to the formation of N6-(dimethylallyl)adenosine (i(6)A). This Clostridium botulinum (strain Eklund 17B / Type B) protein is tRNA dimethylallyltransferase.